Reading from the N-terminus, the 242-residue chain is Ribonuclease 3 (242 aa).

The 130-residue stretch at 7–136 folds into the RNase III domain; the sequence is LEALQNLLGY…LLASIYLDGG (130 aa). Glu-49 serves as a coordination point for Mg(2+). Residue Asp-53 is part of the active site. Mg(2+) contacts are provided by Asp-122 and Glu-125. The active site involves Glu-125. In terms of domain architecture, DRBM spans 167–236; the sequence is DYKTQLQELT…AEKALQIIAA (70 aa).

It belongs to the ribonuclease III family. In terms of assembly, homodimer. Mg(2+) is required as a cofactor.

The protein resides in the cytoplasm. It carries out the reaction Endonucleolytic cleavage to 5'-phosphomonoester.. In terms of biological role, digests double-stranded RNA. Involved in the processing of primary rRNA transcript to yield the immediate precursors to the large and small rRNAs (23S and 16S). Processes some mRNAs, and tRNAs when they are encoded in the rRNA operon. Processes pre-crRNA and tracrRNA of type II CRISPR loci if present in the organism. The protein is Ribonuclease 3 of Syntrophobacter fumaroxidans (strain DSM 10017 / MPOB).